The following is a 373-amino-acid chain: tRNA-specific 2-thiouridylase MnmA (373 aa).

Residues 12 to 19 (GMSGGVDS) and M38 contribute to the ATP site. Positions 98-100 (NPD) are interaction with target base in tRNA. C103 serves as the catalytic Nucleophile. A disulfide bond links C103 and C200. Residue G127 participates in ATP binding. The tract at residues 150–152 (KDQ) is interaction with tRNA. Catalysis depends on C200, which acts as the Cysteine persulfide intermediate. Positions 312–313 (RY) are interaction with tRNA.

The protein belongs to the MnmA/TRMU family.

It is found in the cytoplasm. The enzyme catalyses S-sulfanyl-L-cysteinyl-[protein] + uridine(34) in tRNA + AH2 + ATP = 2-thiouridine(34) in tRNA + L-cysteinyl-[protein] + A + AMP + diphosphate + H(+). Its function is as follows. Catalyzes the 2-thiolation of uridine at the wobble position (U34) of tRNA, leading to the formation of s(2)U34. In Streptococcus mutans serotype c (strain ATCC 700610 / UA159), this protein is tRNA-specific 2-thiouridylase MnmA.